The primary structure comprises 376 residues: Thymidine kinase (376 aa).

The tract at residues 1-44 (MASYPGHQHASAFDQAARSRGHSNRRTALRPRRQQEATEVRPEQ) is disordered. Positions 19 to 32 (SRGHSNRRTALRPR) are enriched in basic residues. Over residues 33–44 (RQQEATEVRPEQ) the composition is skewed to basic and acidic residues. 56 to 63 (GPHGMGKT) contacts ATP. Catalysis depends on Glu-83, which acts as the Proton acceptor. Substrate contacts are provided by Tyr-101 and Gln-125. Arg-216 contributes to the ATP binding site. Arg-222 serves as a coordination point for substrate. A disordered region spans residues 260-280 (GQLSGTAVPPQGAEPQSNAGP).

The protein belongs to the herpesviridae thymidine kinase family. In terms of assembly, homodimer.

It carries out the reaction thymidine + ATP = dTMP + ADP + H(+). Catalyzes the transfer of the gamma-phospho group of ATP to thymidine to generate dTMP in the salvage pathway of pyrimidine synthesis. The dTMP serves as a substrate for DNA polymerase during viral DNA replication. Allows the virus to be reactivated and to grow in non-proliferative cells lacking a high concentration of phosphorylated nucleic acid precursors. The sequence is that of Thymidine kinase from Human herpesvirus 1 (strain SC16) (HHV-1).